The chain runs to 332 residues: Cytoskeleton protein RodZ (332 aa).

Residues 1–111 are Cytoplasmic-facing; sequence MNTETTQDTT…LKKSRKKRDG (111 aa). An HTH cro/C1-type domain is found at 19 to 71; it reads LREARERLGLTQQTIAERLCLKITTVRDIEDGTTPADLAPTFLRGYIRSYAKL. The H-T-H motif DNA-binding region spans 30 to 49; that stretch reads QQTIAERLCLKITTVRDIED. A helical; Signal-anchor for type II membrane protein membrane pass occupies residues 112 to 132; that stretch reads WLMIITWLVVLVVLGLTGAWW. The Periplasmic segment spans residues 133-332; sequence WQNHQAQQAE…QVARLTLTAE (200 aa). Residues 149 to 225 form a disordered region; sequence HASSMQSQTE…PSQANATQSQ (77 aa). Polar residues-rich tracts occupy residues 151–160 and 168–182; these read SSMQSQTEGQ and SAPQETSTAGSAATP. The span at 190–225 shows a compositional bias: low complexity; sequence SATIAATPSTPPSSTTASSAAPSSQSPSQANATQSQ.

Belongs to the RodZ family.

It localises to the cell inner membrane. Cytoskeletal protein that is involved in cell-shape control through regulation of the length of the long axis. The polypeptide is Cytoskeleton protein RodZ (Pectobacterium atrosepticum (strain SCRI 1043 / ATCC BAA-672) (Erwinia carotovora subsp. atroseptica)).